A 137-amino-acid chain; its full sequence is 15.7 kDa heat shock protein, peroxisomal (137 aa).

Residues Gln15 to Thr134 enclose the sHSP domain. Positions Ser135 to Leu137 match the Microbody targeting signal motif.

The protein belongs to the small heat shock protein (HSP20) family. May form oligomeric structures.

It localises to the peroxisome. In terms of biological role, possesses chaperone activity. The polypeptide is 15.7 kDa heat shock protein, peroxisomal (HSP15.7) (Arabidopsis thaliana (Mouse-ear cress)).